A 300-amino-acid polypeptide reads, in one-letter code: SRWWKDLDFVTTLPYARDRAVECYFWTMGVYAEPQYSQARVMLAKTIAMISIVDDTFDAYGIVKEFEVYTDAIQRWDISQIDRLPEYMKISYKALLDLYDDYEKELSKDGRSDVVHYAKERMKEIVRNYFIEAKWFIEGYMPSVSEYLSNALATSTYYLLTTTSYLGMKSATKEHFEWLATNPKILEANATLCRVVDDIATYEVEKGRGQIATGIECYMRDYGVSTEVAMEKFQEMAEIAWKDVNEEILRPTPVSAEILTRILNLARIIDVTYKHNQDGYTHPEKFKPHIIALLVDSIEI.

Residues D54, D58, D197, T201, and E205 each contribute to the Mg(2+) site. The DDXXD motif motif lies at D54–D58.

Belongs to the terpene synthase family. Tpsa subfamily. Requires Mg(2+) as cofactor.

The protein localises to the cytoplasm. The enzyme catalyses (2E,6E)-farnesyl diphosphate = (-)-vetispiradiene + diphosphate. Its pathway is secondary metabolite biosynthesis; terpenoid biosynthesis. Sesquiterpene synthase that catalyzes the formation of vetispiradiene from trans,trans-farnesyl diphosphate. The initial internal cyclization produces the monocyclic intermediate germacrene A. This Hyoscyamus muticus (Egyptian henbane) protein is Vetispiradiene synthase 2.